Here is a 444-residue protein sequence, read N- to C-terminus: Putative permease IIC component YwbA (444 aa).

Residues Met-8–Phe-421 form the PTS EIIC type-3 domain. Transmembrane regions (helical) follow at residues Gly-31–Leu-51, Leu-72–Ala-92, Leu-104–Phe-124, Gly-138–Phe-158, Phe-187–Ile-207, Leu-223–Val-243, Leu-246–Trp-266, Phe-291–Met-311, Pro-349–Ser-371, and Ser-402–Phe-422.

It localises to the cell membrane. Its function is as follows. The phosphoenolpyruvate-dependent sugar phosphotransferase system (PTS), a major carbohydrate active -transport system, catalyzes the phosphorylation of incoming sugar substrates concomitant with their translocation across the cell membrane. The protein is Putative permease IIC component YwbA (ywbA) of Bacillus subtilis (strain 168).